The sequence spans 883 residues: Lethal(3)malignant brain tumor-like protein 3 (883 aa).

The interval 1-64 is interaction with RBPJ. Required for transcription repressor activity on Notch target genes; it reads MTESASSTSG…VKKATATTTW (64 aa). Residues 146-156 show a composition bias toward basic and acidic residues; it reads HAKDKDQKDER. The segment at 146-223 is disordered; it reads HAKDKDQKDE…RGDSAVLKQG (78 aa). 2 stretches are compositionally biased toward acidic residues: residues 157-166 and 185-194; these read DGGEDNDEED and DDGEERDDEM. MBT repeat units lie at residues 232–332, 340–439, and 448–543; these read WCWA…LRPP, FNWQ…LITP, and FSWD…LQAP. A CCHHC-type; degenerate zinc finger spans residues 549-593; sequence LMEPSETGGCPTLGCRGVGHFKKSRYLGTQSGANCPYSEINLSKE. The tract at residues 595-768 is disordered; the sequence is IFPDRLSGDT…TQQQAQTQQQ (174 aa). The segment covering 616–662 has biased composition (basic and acidic residues); sequence KRMDTRESSSSPETREKHANNFKEDSEKKKENEVKTSAEAKVVREEP. Residue lysine 638 forms a Glycyl lysine isopeptide (Lys-Gly) (interchain with G-Cter in SUMO2) linkage. Composition is skewed to low complexity over residues 663-742 and 749-768; these read TPSV…QQPQ and QPQQVQQAQPTQQQAQTQQQ. The SAM domain occupies 811 to 875; it reads WSTDEVSEFI…FNSILMFKAA (65 aa).

As to quaternary structure, interacts with RNF2. Interacts (via SAM domain) with SAMD1 (via SAM domain); the interaction mediates L3MBTL3 binding to chromatin. Interacts with RBPJ; the interaction is required for L3MBTL3 localization to chromatin and is impaired the Notch-derived peptides containing the intracellular domain (NICD). Interacts (via SAM domain) with KDM1A. Interacts with DCAF5. Interacts with DNMT1. Interacts with E2F1. Interacts with SOX2. Interacts with SFMBT1. As to expression, detected in hematopoietic progenitor cells in fetal liver. Detected in adult bone marrow, heart, brain, spleen, lung, liver, kidney and testis.

The protein resides in the nucleus. Functionally, is a negative regulator of Notch target genes expression, required for RBPJ-mediated transcriptional repression. It recruits KDM1A to Notch-responsive elements and promotes KDM1A-mediated H3K4me demethylation. Involved in the regulation of ubiquitin-dependent degradation of a set of methylated non-histone proteins, including SOX2. It acts as an adapter recruiting the CRL4-DCAF5 E3 ubiquitin ligase complex to methylated target proteins. Also involved in the regulation of ubiquitin-dependent degradation of methylated DNMT1 and E2F1. Required for normal maturation of myeloid progenitor cells. The protein is Lethal(3)malignant brain tumor-like protein 3 of Mus musculus (Mouse).